A 156-amino-acid chain; its full sequence is Small ribosomal subunit protein uS7 (156 aa).

The protein belongs to the universal ribosomal protein uS7 family. As to quaternary structure, part of the 30S ribosomal subunit. Contacts proteins S9 and S11.

One of the primary rRNA binding proteins, it binds directly to 16S rRNA where it nucleates assembly of the head domain of the 30S subunit. Is located at the subunit interface close to the decoding center, probably blocks exit of the E-site tRNA. This Pasteurella multocida (strain Pm70) protein is Small ribosomal subunit protein uS7.